Here is an 83-residue protein sequence, read N- to C-terminus: DNA-directed RNA polymerase subunit Rpo5 (83 aa).

The protein belongs to the archaeal Rpo5/eukaryotic RPB5 RNA polymerase subunit family. Part of the RNA polymerase complex.

The protein localises to the cytoplasm. The catalysed reaction is RNA(n) + a ribonucleoside 5'-triphosphate = RNA(n+1) + diphosphate. DNA-dependent RNA polymerase (RNAP) catalyzes the transcription of DNA into RNA using the four ribonucleoside triphosphates as substrates. This is DNA-directed RNA polymerase subunit Rpo5 from Metallosphaera sedula (strain ATCC 51363 / DSM 5348 / JCM 9185 / NBRC 15509 / TH2).